A 45-amino-acid chain; its full sequence is Photosystem II reaction center protein K (45 aa).

Positions 1–8 (METIYLLA) are excised as a propeptide. Residues 16–40 (IFDPLVDVLPVIPLFFLALAFVWQA) form a helical membrane-spanning segment.

This sequence belongs to the PsbK family. In terms of assembly, PSII is composed of 1 copy each of membrane proteins PsbA, PsbB, PsbC, PsbD, PsbE, PsbF, PsbH, PsbI, PsbJ, PsbK, PsbL, PsbM, PsbT, PsbX, PsbY, PsbZ, Psb30/Ycf12, peripheral proteins PsbO, CyanoQ (PsbQ), PsbU, PsbV and a large number of cofactors. It forms dimeric complexes.

It is found in the cellular thylakoid membrane. One of the components of the core complex of photosystem II (PSII). PSII is a light-driven water:plastoquinone oxidoreductase that uses light energy to abstract electrons from H(2)O, generating O(2) and a proton gradient subsequently used for ATP formation. It consists of a core antenna complex that captures photons, and an electron transfer chain that converts photonic excitation into a charge separation. This Synechocystis sp. (strain ATCC 27184 / PCC 6803 / Kazusa) protein is Photosystem II reaction center protein K.